A 190-amino-acid polypeptide reads, in one-letter code: Xanthine phosphoribosyltransferase 1 (190 aa).

Xanthine is bound by residues L20 and N27. A128–A132 is a binding site for 5-phospho-alpha-D-ribose 1-diphosphate. Residue K156 coordinates xanthine.

The protein belongs to the purine/pyrimidine phosphoribosyltransferase family. Xpt subfamily. In terms of assembly, homodimer.

The protein resides in the cytoplasm. It carries out the reaction XMP + diphosphate = xanthine + 5-phospho-alpha-D-ribose 1-diphosphate. It participates in purine metabolism; XMP biosynthesis via salvage pathway; XMP from xanthine: step 1/1. Its function is as follows. Converts the preformed base xanthine, a product of nucleic acid breakdown, to xanthosine 5'-monophosphate (XMP), so it can be reused for RNA or DNA synthesis. In Clostridium botulinum (strain ATCC 19397 / Type A), this protein is Xanthine phosphoribosyltransferase 1.